The sequence spans 106 residues: Ig kappa-b4 chain C region (106 aa).

The 94-residue stretch at 6–99 (PSVLLFPPSK…VQGSASPIVQ (94 aa)) folds into the Ig-like domain. C27 and C87 are oxidised to a cystine. The segment covering 48–64 (QQSGIENSKTPQSPEDN) has biased composition (polar residues). Residues 48-67 (QQSGIENSKTPQSPEDNTYS) are disordered.

The sequence is that of Ig kappa-b4 chain C region (K-BAS) from Oryctolagus cuniculus (Rabbit).